The sequence spans 166 residues: Transcription antitermination protein NusB (166 aa).

Residues Met-1–Asp-18 show a composition bias toward basic and acidic residues. The interval Met-1–Arg-28 is disordered.

Belongs to the NusB family.

Involved in transcription antitermination. Required for transcription of ribosomal RNA (rRNA) genes. Binds specifically to the boxA antiterminator sequence of the ribosomal RNA (rrn) operons. The protein is Transcription antitermination protein NusB of Pseudomonas putida (strain GB-1).